Here is a 130-residue protein sequence, read N- to C-terminus: UPF0102 protein RSc3265 (130 aa).

It belongs to the UPF0102 family.

In Ralstonia nicotianae (strain ATCC BAA-1114 / GMI1000) (Ralstonia solanacearum), this protein is UPF0102 protein RSc3265.